Consider the following 416-residue polypeptide: Nuclear hormone receptor family member nhr-67 (416 aa).

A DNA-binding region (nuclear receptor) is located at residues 18-98 (DVDCRVCEDH…IGMNKDAVQH (81 aa)). 2 NR C4-type zinc fingers span residues 21–41 (CRVCEDHSSGKHYSIFSCDGC) and 57–86 (CKNKGSPSEGQCKVDKTHRNQCRACRLRKC). The segment at 331–398 (KTETEEGEDI…SSRPRHSIRS (68 aa)) is disordered. Over residues 335 to 346 (EEGEDIEEEDDA) the composition is skewed to acidic residues. The segment covering 377–390 (SSTQPSSASSPSSS) has biased composition (low complexity).

This sequence belongs to the nuclear hormone receptor family. Expressed in linker cell.

It is found in the nucleus. In terms of biological role, orphan nuclear receptor that binds DNA containing an extended core motif half-site sequence 5'-AAGTCA-3'. In males, plays an essential role in the migration of the linker cell which guides gonad elongation during the L3 and L4 stages of larval development by negatively regulating the expression of netrin receptor unc-5 at the mid-L3 stage. Involved in the regulation of non-apoptotic cell death in the linker cell, acting upstream of or in parallel to transcription factor hsf-1. Represses hypoxia response genes, fmo-2 and acs-2, in both normoxic and hypoxic conditions, probably acting via repression of nuclear receptor nhr-49. In Caenorhabditis elegans, this protein is Nuclear hormone receptor family member nhr-67 (nhr-67).